Here is a 564-residue protein sequence, read N- to C-terminus: Ell-associated factor Eaf (564 aa).

Disordered regions lie at residues 179–255 and 270–564; these read SGPG…MITD and QANI…DDDD. Residues 186–205 are compositionally biased toward polar residues; the sequence is ENSTMRVSSKTKVSTGSRRN. Serine 215 bears the Phosphoserine mark. Residues 274–283 are compositionally biased toward low complexity; that stretch reads SGSSTGSSSG. The span at 297–309 shows a compositional bias: basic residues; sequence GKQRQAHGKRQQI. Composition is skewed to low complexity over residues 315–329, 343–387, and 409–420; these read PPVQ…QQQP, QQQQ…QQRP, and ASQSVAQAAAVL. A compositionally biased stretch (acidic residues) spans 438–453; that stretch reads DSSDSDSGSDSDDSTE. 3 stretches are compositionally biased toward low complexity: residues 463 to 505, 523 to 533, and 546 to 564; these read EQQQ…NQLP, QQPQPQPQQQQ, and NDLL…DDDD.

The protein belongs to the EAF family.

It is found in the nucleus. Its function is as follows. Promotes transcriptional elongation by Su(Tpl)/ELL. Essential for development. The protein is Ell-associated factor Eaf of Drosophila pseudoobscura pseudoobscura (Fruit fly).